We begin with the raw amino-acid sequence, 571 residues long: FAD-binding monooxygenase VdtE (571 aa).

FAD is bound by residues 44–47 (VWYW), 56–57 (DS), and tyrosine 62. 54-56 (RVD) contributes to the NADP(+) binding site. Residues 187 to 193 (TGASAVQ) and 210 to 211 (RT) each bind NADP(+).

The protein belongs to the FAD-binding monooxygenase family. The cofactor is FAD.

The enzyme catalyses 9,10-dihydroxy-7-methoxy-3-(2-oxopropyl)-1H-benzo[g]isochromen-1-one + NADPH + O2 + H(+) = methyl 2-[(3S)-9,10-dihydroxy-7-methoxy-1-oxo-1H,3H,4H-naphtho[2,3-c]pyran-3-yl]acetate + NADP(+) + H2O. It catalyses the reaction (3S)-9,10-dihydroxy-7-methoxy-3-(2-oxopropyl)-1H,3H,4H-naphtho[2,3-c]pyran-1-one + NADPH + O2 + H(+) = semiviriditoxin + NADP(+) + H2O. The protein operates within secondary metabolite biosynthesis. Its function is as follows. FAD-binding monooxygenase; part of the gene cluster that mediates the biosynthesis of viriditoxin, one of the 'classical' secondary metabolites produced by fungi and that has antibacterial activity. The first step is performed by the polyketide synthase VdtA which condenses one acetyl-CoA and 6 malonyl-CoA units to form the heptaketide monomer backbone of viriditoxin. The product of VdtA is then O-methylated on C7 by the O-methyltransferase VdtC. The O-methyl group is important for the stereoselective coupling of the monomers at the final step of viriditoxin biosynthesis. The short-chain dehydrogenase/reductase VdtF then acts as a stereospecific reductase converting the pyrone to dihydropyrone via the reduction of the C3-C4 double bond. The FAD-binding monooxygenase VdtE then converts the ketone group into a methyl-ester group to yield semi-viriditoxin. Finally, the laccase VdtB is involved in dimerization of 2 semi-viriditoxin molecules to yield the final viriditoxin. VdtB is responsible for the regioselective 6,6'-coupling of semi-viriditoxin, which yields (M)-viriditoxin and (P)-viriditoxin at a ratio of 1:2. The non-catalytic carboxylesterase-like protein VdtD affects the stereochemistical outcome of the coupling. The highly reducing polyketide synthase VdtX is not involved in viriditoxin synthesis, but might possibly play a role in the production of additional metabolites not identified yet. This chain is FAD-binding monooxygenase VdtE, found in Byssochlamys spectabilis (Paecilomyces variotii).